The primary structure comprises 344 residues: Phenylalanine--tRNA ligase alpha subunit (344 aa).

Mg(2+) is bound at residue E257.

The protein belongs to the class-II aminoacyl-tRNA synthetase family. Phe-tRNA synthetase alpha subunit type 1 subfamily. As to quaternary structure, tetramer of two alpha and two beta subunits. Mg(2+) is required as a cofactor.

It is found in the cytoplasm. It carries out the reaction tRNA(Phe) + L-phenylalanine + ATP = L-phenylalanyl-tRNA(Phe) + AMP + diphosphate + H(+). The chain is Phenylalanine--tRNA ligase alpha subunit from Chlorobium chlorochromatii (strain CaD3).